The primary structure comprises 71 residues: Large ribosomal subunit protein bL31 (71 aa).

Residues Cys-16, Cys-18, Cys-36, and Cys-39 each coordinate Zn(2+).

Belongs to the bacterial ribosomal protein bL31 family. Type A subfamily. Part of the 50S ribosomal subunit. Requires Zn(2+) as cofactor.

Its function is as follows. Binds the 23S rRNA. The protein is Large ribosomal subunit protein bL31 of Thermus thermophilus (strain ATCC BAA-163 / DSM 7039 / HB27).